The primary structure comprises 108 residues: Protein FMC1 homolog (108 aa).

The protein belongs to the FMC1 family.

In Caenorhabditis elegans, this protein is Protein FMC1 homolog.